The primary structure comprises 376 residues: uncharacterized protein (376 aa).

2 stretches are compositionally biased toward low complexity: residues 73–99 and 228–243; these read NNSI…NNNN and SSFS…TVSS. Disordered regions lie at residues 73–100 and 222–269; these read NNSI…NNNL and EQDP…KISD.

This is an uncharacterized protein from Saccharomyces cerevisiae (strain ATCC 204508 / S288c) (Baker's yeast).